The chain runs to 247 residues: Lysosomal membrane ascorbate-dependent ferrireductase CYB561A3 (247 aa).

Over methionine 1–glycine 3 the chain is Cytoplasmic. Residues isoleucine 4–leucine 24 traverse the membrane as a helical segment. The region spanning leucine 13 to serine 223 is the Cytochrome b561 domain. At valine 25–asparagine 46 the chain is on the lumenal side. Residues tryptophan 47–tyrosine 67 form a helical membrane-spanning segment. Heme b-binding residues include histidine 48 and arginine 68. Residues arginine 68 to leucine 82 lie on the Cytoplasmic side of the membrane. L-ascorbate is bound by residues lysine 77 and lysine 81. A helical transmembrane segment spans residues leucine 83–phenylalanine 103. Residues histidine 84, asparagine 113–serine 116, and histidine 118 each bind heme b. The Lumenal segment spans residues asparagine 104–tryptophan 120. The helical transmembrane segment at valine 121 to leucine 141 threads the bilayer. Residues leucine 142–proline 155 lie on the Cytoplasmic side of the membrane. Arginine 150 contacts L-ascorbate. The helical transmembrane segment at threonine 156–isoleucine 176 threads the bilayer. Heme b is bound by residues histidine 157 and glutamate 178. Residues asparagine 177–alanine 201 lie on the Lumenal side of the membrane. A glycan (N-linked (GlcNAc...) asparagine) is linked at asparagine 189. Residues valine 202 to leucine 222 traverse the membrane as a helical segment. The Cytoplasmic segment spans residues serine 223 to serine 247. Glutamine 228 lines the heme b pocket.

As to quaternary structure, homodimer. The cofactor is heme b.

It is found in the late endosome membrane. The protein resides in the lysosome membrane. It catalyses the reaction Fe(3+)(out) + L-ascorbate(in) = monodehydro-L-ascorbate radical(in) + Fe(2+)(out) + H(+). Transmembrane reductase that uses ascorbate as an electron donor in the cytoplasm and transfers electrons across membranes to reduce iron cations Fe(3+) into Fe(2+) in the lumen of the late endosome and lysosome. Reduced iron can then be extruded from the late endosome and lysosome to the cytoplasm by divalent metal-specific transporters. It is therefore most probably involved in endosomal and lysosomal cellular iron homeostasis. This Danio rerio (Zebrafish) protein is Lysosomal membrane ascorbate-dependent ferrireductase CYB561A3 (cyb561a3a).